We begin with the raw amino-acid sequence, 417 residues long: 3-oxo-isoapionate-4-phosphate decarboxylase (417 aa).

Mg(2+) is bound by residues Lys177, Asp179, and Glu180. Lys177 is subject to N6-carboxylysine.

This sequence belongs to the RuBisCO large chain family. It depends on Mg(2+) as a cofactor.

The catalysed reaction is 3-oxoisoapionate 4-phosphate + H(+) = L-erythrulose 1-phosphate + CO2. The protein operates within carbohydrate metabolism. Involved in catabolism of D-apiose. Catalyzes the decarboxylation of 3-oxo-isoapionate 4-phosphate to L-erythrulose 1-phosphate. The chain is 3-oxo-isoapionate-4-phosphate decarboxylase from Rhizobium etli (strain ATCC 51251 / DSM 11541 / JCM 21823 / NBRC 15573 / CFN 42).